The following is a 112-amino-acid chain: Putative pterin-4-alpha-carbinolamine dehydratase (112 aa).

This sequence belongs to the pterin-4-alpha-carbinolamine dehydratase family.

It carries out the reaction (4aS,6R)-4a-hydroxy-L-erythro-5,6,7,8-tetrahydrobiopterin = (6R)-L-erythro-6,7-dihydrobiopterin + H2O. In Shewanella baltica (strain OS223), this protein is Putative pterin-4-alpha-carbinolamine dehydratase.